Here is a 400-residue protein sequence, read N- to C-terminus: Na(+)/H(+) antiporter NhaA (400 aa).

11 helical membrane-spanning segments follow: residues 10–30 (FNLE…AMII), 60–80 (AHHW…GLEL), 95–115 (IILP…VYLF), 126–146 (GWAI…SLLG), 155–175 (VFLV…IALF), 178–198 (NDLS…LYLL), 218–238 (VAVL…ALFI), 265–285 (GILP…AGFG), 295–315 (IAAG…WLIF), 334–354 (AALL…LAFA), and 364–384 (LGII…LKAT).

This sequence belongs to the NhaA Na(+)/H(+) (TC 2.A.33) antiporter family.

It localises to the cell inner membrane. The catalysed reaction is Na(+)(in) + 2 H(+)(out) = Na(+)(out) + 2 H(+)(in). Na(+)/H(+) antiporter that extrudes sodium in exchange for external protons. In Psychrobacter cryohalolentis (strain ATCC BAA-1226 / DSM 17306 / VKM B-2378 / K5), this protein is Na(+)/H(+) antiporter NhaA.